Consider the following 59-residue polypeptide: UPF0434 protein Shewmr7_2490 (59 aa).

The protein belongs to the UPF0434 family.

The chain is UPF0434 protein Shewmr7_2490 from Shewanella sp. (strain MR-7).